The sequence spans 1071 residues: ATP-dependent helicase/deoxyribonuclease subunit B (1071 aa).

The protein belongs to the helicase family. AddB/RexB type 2 subfamily. As to quaternary structure, heterodimer of AddA and RexB. The cofactor is Mg(2+).

Functionally, the heterodimer acts as both an ATP-dependent DNA helicase and an ATP-dependent, dual-direction single-stranded exonuclease. Recognizes the chi site generating a DNA molecule suitable for the initiation of homologous recombination. This subunit has 5' -&gt; 3' nuclease activity but not helicase activity. The chain is ATP-dependent helicase/deoxyribonuclease subunit B from Streptococcus pyogenes serotype M28 (strain MGAS6180).